A 732-amino-acid chain; its full sequence is Polyribonucleotide nucleotidyltransferase (732 aa).

Mg(2+)-binding residues include Asp503 and Asp509. In terms of domain architecture, KH spans 570–629 (PRLTSIQIPVDAIGLIIGKGGETIRSITEETGAEINIEDDGTVTIACSSPEGTNAAVETI). An S1 motif domain is found at 639 to 713 (GNTYLGKVRD…GKNRFALSIK (75 aa)). The segment at 710-732 (LSIKAVESEPEKSDENKAGTEGN) is disordered. Residues 715 to 732 (VESEPEKSDENKAGTEGN) are compositionally biased toward basic and acidic residues.

It belongs to the polyribonucleotide nucleotidyltransferase family. The cofactor is Mg(2+).

The protein resides in the cytoplasm. It catalyses the reaction RNA(n+1) + phosphate = RNA(n) + a ribonucleoside 5'-diphosphate. Involved in mRNA degradation. Catalyzes the phosphorolysis of single-stranded polyribonucleotides processively in the 3'- to 5'-direction. This chain is Polyribonucleotide nucleotidyltransferase, found in Chlorobium phaeobacteroides (strain DSM 266 / SMG 266 / 2430).